We begin with the raw amino-acid sequence, 259 residues long: MAHAIPRPAEEIPLVPGRARSVRLGSTLPRVMDCAYGSPMAVDGDVRTGGDCGGGEGLYPTSTDTAAHAVSLPRSVGEFASAVRAMSADAADALRRGAGPPPEIWPRAYRMFCELFGRYAVSPMPVFHSADPLRRAVGRYLVDLGAAPVETHAELSTRLLFCAHWCCLGHAFGCSRQAMYERECARFFEARLGIGETPPADSERYWVALLDMAGADPELFPRHAAAAAYLRTRGRKLPLPLPPQAGSATVSVASQSINF.

A zinc finger spans residues 162-174 (CAHWCCLGHAFGC).

This sequence belongs to the herpesviridae US10 family. Phosphorylated.

It is found in the virion tegument. Its subcellular location is the host nucleus matrix. The polypeptide is Virion protein US10 homolog (Equine herpesvirus 4 (strain 1942) (EHV-4)).